The chain runs to 314 residues: Ribosome production factor 2 homolog (314 aa).

Positions 28 to 238 (KKTLILHGTK…IRRNRLPNDS (211 aa)) constitute a Brix domain. Positions 238–314 (SLMKEAMRTS…VAKKMKVSSE (77 aa)) are disordered. 2 stretches are compositionally biased toward basic and acidic residues: residues 239-249 (LMKEAMRTSKD) and 275-314 (QKLKEMKLFDKSKGSKRERKDAKLKHKEETVAKKMKVSSE).

It belongs to the RPF2 family.

It is found in the nucleus. It localises to the nucleolus. The chain is Ribosome production factor 2 homolog from Arabidopsis thaliana (Mouse-ear cress).